We begin with the raw amino-acid sequence, 1940 residues long: Myosin-3 (1940 aa).

The 50-residue stretch at 33–82 (DAKTYCFVVDSKEEYAKGKIKSSQDGKVTVETEDNRTLVVKPEDVYAMNP) folds into the Myosin N-terminal SH3-like domain. One can recognise a Myosin motor domain in the interval 86–779 (DRIEDMAMLT…LLGTLEEMRD (694 aa)). Position 130 is an N6,N6,N6-trimethyllysine (K130). 179-186 (GESGAGKT) lines the ATP pocket. 2 actin-binding regions span residues 656–678 (LNKL…IPNE) and 758–772 (KFGH…GLLG). One can recognise an IQ domain in the interval 782 to 811 (LAKLITRTQAVCRGFLMRVEFQKMVQRRES). Residues 840–1933 (LLKSAETEKE…KTRDFTSSRM (1094 aa)) are a coiled coil.

It belongs to the TRAFAC class myosin-kinesin ATPase superfamily. Myosin family. In terms of assembly, muscle myosin is a hexameric protein that consists of 2 heavy chain subunits (MHC), 2 alkali light chain subunits (MLC) and 2 regulatory light chain subunits (MLC-2). Expressed in fetal bone, thymus, placenta, heart, brain, and liver.

The protein localises to the cytoplasm. It is found in the myofibril. Functionally, muscle contraction. This is Myosin-3 (MYH3) from Homo sapiens (Human).